The primary structure comprises 316 residues: Transaldolase (316 aa).

The Schiff-base intermediate with substrate role is filled by K132.

The protein belongs to the transaldolase family. Type 1 subfamily. Homodimer.

It is found in the cytoplasm. The enzyme catalyses D-sedoheptulose 7-phosphate + D-glyceraldehyde 3-phosphate = D-erythrose 4-phosphate + beta-D-fructose 6-phosphate. The protein operates within carbohydrate degradation; pentose phosphate pathway; D-glyceraldehyde 3-phosphate and beta-D-fructose 6-phosphate from D-ribose 5-phosphate and D-xylulose 5-phosphate (non-oxidative stage): step 2/3. Its function is as follows. Transaldolase is important for the balance of metabolites in the pentose-phosphate pathway. This chain is Transaldolase, found in Vibrio vulnificus (strain CMCP6).